A 696-amino-acid chain; its full sequence is Elongation factor G (696 aa).

The tr-type G domain maps to glutamate 8–isoleucine 288. GTP contacts are provided by residues alanine 17–threonine 24, aspartate 86–histidine 90, and asparagine 140–aspartate 143.

Belongs to the TRAFAC class translation factor GTPase superfamily. Classic translation factor GTPase family. EF-G/EF-2 subfamily.

The protein resides in the cytoplasm. In terms of biological role, catalyzes the GTP-dependent ribosomal translocation step during translation elongation. During this step, the ribosome changes from the pre-translocational (PRE) to the post-translocational (POST) state as the newly formed A-site-bound peptidyl-tRNA and P-site-bound deacylated tRNA move to the P and E sites, respectively. Catalyzes the coordinated movement of the two tRNA molecules, the mRNA and conformational changes in the ribosome. The polypeptide is Elongation factor G (Chelativorans sp. (strain BNC1)).